Consider the following 525-residue polypeptide: Estrogen receptor (525 aa).

The tract at residues 1–59 is disordered; it reads PTSPLVFVPSSPRLSPFMHPPSHHYLETTSTPVYRSSVSSSQQQLSREDQCGTSDDSYS. The interval 1-82 is modulating; the sequence is PTSPLVFVPS…GFEMAKEMRF (82 aa). Residues 36 to 45 show a composition bias toward low complexity; that stretch reads SSVSSSQQQL. 2 consecutive NR C4-type zinc fingers follow at residues 83–103 and 119–143; these read CAVC…CEGC and CPAT…LRKC. A DNA-binding region (nuclear receptor) is located at residues 83 to 148; it reads CAVCSDYASG…RLRKCYQVGM (66 aa). Residues 149–209 are hinge; that stretch reads MKGGVRKDRG…GGGKSSIIGM (61 aa). The span at 154 to 182 shows a compositional bias: basic and acidic residues; the sequence is RKDRGRVLRRDKRRTGTSDKASKDLEHRT. Residues 154 to 203 are disordered; the sequence is RKDRGRVLRRDKRRTGTSDKASKDLEHRTAPPQDRRKHSSSSSSAGGGGK. The NR LBD domain occupies 210–446; it reads SPDQVLLLLQ…DLLLEMLDAH (237 aa). Residues 452–465 are compositionally biased toward basic and acidic residues; it reads DRPAESWSQADREP. The tract at residues 452–525 is disordered; that stretch reads DRPAESWSQA…GPRSDCTHIL (74 aa). The segment covering 479–493 has biased composition (gly residues); the sequence is SGGGDGGPSSAGSGS.

The protein belongs to the nuclear hormone receptor family. NR3 subfamily. Binds DNA as a homodimer. Can form a heterodimer with ER-beta. In terms of tissue distribution, abundant in the liver, less abundant in the testes and barely detectable in the ovary and brain.

The protein resides in the nucleus. In terms of biological role, the steroid hormones and their receptors are involved in the regulation of eukaryotic gene expression and affect cellular proliferation and differentiation in target tissues. This Micropogonias undulatus (Atlantic croaker) protein is Estrogen receptor (esr1).